The primary structure comprises 413 residues: Monacolin J acid methylbutanoyltransferase (413 aa).

Arginine 73 lines the monacolin J pocket. The Acyl-ester intermediate role is filled by serine 76. 3 residues coordinate monacolin J: arginine 173, tyrosine 188, and tyrosine 258. Residue glycine 366 coordinates 2-methylbutanoate. Residues glutamate 388 and tryptophan 390 each coordinate monacolin J.

The protein belongs to the class-A beta-lactamase family. Interacts with LovF.

It carries out the reaction monacolin J carboxylate + (S)-2-methylbutanoyl-[2-methylbutanoate polyketide synthase] = lovastatin carboxylate + holo-[2-methylbutanoate polyketide synthase]. It functions in the pathway polyketide biosynthesis; lovastatin biosynthesis. Functionally, monacolin J acid methylbutanoyltransferase; part of the gene cluster that mediates the biosynthesis of lovastatin (also known as mevinolin, mevacor or monacolin K), a hypolipidemic inhibitor of (3S)-hydroxymethylglutaryl-coenzyme A (HMG-CoA) reductase (HMGR). The first step in the biosynthesis of lovastatin is the production of dihydromonacolin L acid by the lovastatin nonaketide synthase lovB and the trans-acting enoyl reductase lovC via condensation of one acetyl-CoA unit and 8 malonyl-CoA units. Dihydromonacolin L acid is released from lovB by the thioesterase lovG. Next, dihydromonacolin L acid is oxidized by the dihydromonacolin L monooxygenase lovA twice to form monacolin J acid. The 2-methylbutyrate moiety of lovastatin is synthesized by the lovastatin diketide synthase lovF via condensation of one acetyl-CoA unit and one malonyl-CoA unit. Finally, the covalent attachment of this moiety to monacolin J acid is catalyzed by the transesterase lovD to yield lovastatin. LovD has broad substrate specificity and can also convert monacolin J to simvastatin using alpha-dimethylbutanoyl-S-methyl-3-mercaptopropionate (DMB-S-MMP) as the thioester acyl donor, and can also catalyze the reverse reaction and function as hydrolase in vitro. LovD has much higher activity with LovF-bound 2-methylbutanoate than with free diketide substrates. The protein is Monacolin J acid methylbutanoyltransferase of Aspergillus terreus (strain NIH 2624 / FGSC A1156).